We begin with the raw amino-acid sequence, 27 residues long: Snake venom serine protease Afaacytin alpha/beta/beta' chains (27 aa).

The Peptidase S1 domain maps to 1–27 (VIGGAECNINEHRSLVLLYXSSSXFGE).

It belongs to the peptidase S1 family. Snake venom subfamily. In terms of assembly, heterodimer of an alpha and a beta chain. Subunit beta is constituted of two disulfide-linked polypeptidic chains, beta and beta'. Calcium appears to be required for structural cohesion of the molecule. Both chains alpha and beta are N-glycosylated. As to expression, expressed by the venom gland.

The protein resides in the secreted. Its activity is regulated as follows. Inhibited by diisopropylfluorophosphate (DFP), benzamidine, heparin and hirudin, but not by plasmatic thrombin inhibitors, antithrombin-III and ecotin. Its function is as follows. Snake venom serine protease that exhibits alpha-fibrinase and beta-fibrinogenase activities. It replaces missing factors VIII (F8) and IX (F9) in deficient plasmas by activating purified human factor X (F10) into factor Xa. It releases serotonin from platelets and induces platelet aggregation in human (but not in rabbit). Has caseinolytic, arginine-esterase and amidase activities. The polypeptide is Snake venom serine protease Afaacytin alpha/beta/beta' chains (Cerastes cerastes (Horned desert viper)).